A 52-amino-acid chain; its full sequence is MFGFIYRDPSPAPQGKIRDGSKDPKTPGGGGGGGGGISPNGGAPLGGKGFSM.

The interval 1–52 (MFGFIYRDPSPAPQGKIRDGSKDPKTPGGGGGGGGGISPNGGAPLGGKGFSM) is disordered. Residues 16–25 (KIRDGSKDPK) are compositionally biased toward basic and acidic residues. Over residues 27–52 (PGGGGGGGGGISPNGGAPLGGKGFSM) the composition is skewed to gly residues.

This is an uncharacterized protein from Dictyostelium discoideum (Social amoeba).